A 306-amino-acid polypeptide reads, in one-letter code: UDP-3-O-acyl-N-acetylglucosamine deacetylase (306 aa).

Zn(2+) is bound by residues His-79, His-238, and Asp-242. His-265 functions as the Proton donor in the catalytic mechanism.

The protein belongs to the LpxC family. The cofactor is Zn(2+).

It catalyses the reaction a UDP-3-O-[(3R)-3-hydroxyacyl]-N-acetyl-alpha-D-glucosamine + H2O = a UDP-3-O-[(3R)-3-hydroxyacyl]-alpha-D-glucosamine + acetate. It functions in the pathway glycolipid biosynthesis; lipid IV(A) biosynthesis; lipid IV(A) from (3R)-3-hydroxytetradecanoyl-[acyl-carrier-protein] and UDP-N-acetyl-alpha-D-glucosamine: step 2/6. Its function is as follows. Catalyzes the hydrolysis of UDP-3-O-myristoyl-N-acetylglucosamine to form UDP-3-O-myristoylglucosamine and acetate, the committed step in lipid A biosynthesis. The polypeptide is UDP-3-O-acyl-N-acetylglucosamine deacetylase (Idiomarina loihiensis (strain ATCC BAA-735 / DSM 15497 / L2-TR)).